We begin with the raw amino-acid sequence, 245 residues long: 1-(5-phosphoribosyl)-5-[(5-phosphoribosylamino)methylideneamino] imidazole-4-carboxamide isomerase (245 aa).

The active-site Proton acceptor is Asp-8. Asp-129 functions as the Proton donor in the catalytic mechanism.

Belongs to the HisA/HisF family.

The protein resides in the cytoplasm. It carries out the reaction 1-(5-phospho-beta-D-ribosyl)-5-[(5-phospho-beta-D-ribosylamino)methylideneamino]imidazole-4-carboxamide = 5-[(5-phospho-1-deoxy-D-ribulos-1-ylimino)methylamino]-1-(5-phospho-beta-D-ribosyl)imidazole-4-carboxamide. It participates in amino-acid biosynthesis; L-histidine biosynthesis; L-histidine from 5-phospho-alpha-D-ribose 1-diphosphate: step 4/9. In Sinorhizobium fredii (strain NBRC 101917 / NGR234), this protein is 1-(5-phosphoribosyl)-5-[(5-phosphoribosylamino)methylideneamino] imidazole-4-carboxamide isomerase.